Consider the following 434-residue polypeptide: Innexin-14 (434 aa).

A run of 4 helical transmembrane segments spans residues L30–G50, W106–A126, I301–V321, and Y365–K385.

Belongs to the pannexin family.

Its subcellular location is the cell membrane. It localises to the cell junction. The protein resides in the gap junction. In terms of biological role, structural component of the gap junctions. This chain is Innexin-14 (inx-14), found in Caenorhabditis elegans.